The chain runs to 54 residues: Large ribosomal subunit protein bL33A (54 aa).

The protein belongs to the bacterial ribosomal protein bL33 family.

The chain is Large ribosomal subunit protein bL33A from Streptomyces griseus subsp. griseus (strain JCM 4626 / CBS 651.72 / NBRC 13350 / KCC S-0626 / ISP 5235).